We begin with the raw amino-acid sequence, 277 residues long: Sulfate transport system permease protein CysT (277 aa).

The next 7 helical transmembrane spans lie at 17–37, 64–84, 99–119, 136–156, 188–205, 215–235, and 243–263; these read LGTSLLFVCLILLLPLSALVM, LLAAFVASIFNGVFGLLMAWI, LMDLPFALPTAVAGLTLASLF, VTYTWLGIAVAMAFTSIPFVV, VVLPELSPALIAGVALSF, VIFIAGNIAWKTEVTSLMIFV, and PAASAIASVILAASLLLLFSI. The 204-residue stretch at 60 to 263 folds into the ABC transmembrane type-1 domain; it reads YKVTLLAAFV…AASLLLLFSI (204 aa).

It belongs to the binding-protein-dependent transport system permease family. CysTW subfamily. The complex is composed of two ATP-binding proteins (CysA), two transmembrane proteins (CysT and CysW) and a solute-binding protein (CysP).

Its subcellular location is the cell inner membrane. Its function is as follows. Part of the ABC transporter complex CysAWTP (TC 3.A.1.6.1) involved in sulfate/thiosulfate import. Probably responsible for the translocation of the substrate across the membrane. The protein is Sulfate transport system permease protein CysT (cysU) of Salmonella typhimurium (strain LT2 / SGSC1412 / ATCC 700720).